The primary structure comprises 361 residues: U7 snRNA-associated Sm-like protein LSm11 (361 aa).

Residues 1–26 (MEEREWGARSARAGSPASPPSPRLDV) form a disordered region. Ser15 and Ser21 each carry phosphoserine. Arg41 carries the post-translational modification Omega-N-methylarginine. Positions 67–142 (RTGRGRARGT…QGPGRSKKAP (76 aa)) are disordered. Low complexity predominate over residues 76 to 96 (TGEPASAGTSTGTSTGAGSSS). A Glycyl lysine isopeptide (Lys-Gly) (interchain with G-Cter in SUMO2) cross-link involves residue Lys121. Ser155 carries the phosphoserine modification. Residues 155–230 (SPLGELHRCI…LTLTRLFDRL (76 aa)) enclose the Sm domain. An SM 1 region spans residues 172–205 (VHIRTFKGLRGVCTGFLVAFDKFWNMALTDVDET). Positions 268 to 335 (RGDTDRSSHR…RKKKRKPKVD (68 aa)) are disordered. Ser281 bears the Phosphoserine mark. Polar residues predominate over residues 307 to 323 (GSSVGGTFSRATTLSRG). An SM 2 region spans residues 344 to 357 (INQIFIRGENVLLV).

Belongs to the snRNP Sm proteins family. As to quaternary structure, component of the heptameric ring U7 snRNP complex, or U7 Sm protein core complex, at least composed of LSM10, LSM11, SNRPB, SNRPD3, SNRPE, SNRPF, SNRPG and U7 snRNA. Formation of the U7 snRNP is an ATP-dependent process mediated by a specialized SMN complex containing at least the Sm protein core complex and additionally, the U7-specific LSM10 and LSM11 proteins. Identified in a histone pre-mRNA complex, at least composed of ERI1, LSM11, SLBP, SNRPB, SYNCRIP and YBX1. Interacts (via the Sm domains) with CLNS1A. Interacts with PRMT5, SMN, ZNF473 and WDR77. Post-translationally, not methylated.

The protein localises to the nucleus. Component of the U7 snRNP complex that is involved in the histone 3'-end pre-mRNA processing. Increases U7 snRNA levels but not histone 3'-end pre-mRNA processing activity, when overexpressed. Required for cell cycle progression from G1 to S phases. Binds specifically to the Sm-binding site of U7 snRNA. The protein is U7 snRNA-associated Sm-like protein LSm11 of Mus musculus (Mouse).